The sequence spans 485 residues: Glutamate--tRNA ligase (485 aa).

The 'HIGH' region motif lies at 11 to 21; sequence PSPTGLLHIGN. Positions 255–259 match the 'KMSKS' region motif; sequence KLSKR. Residue Lys258 participates in ATP binding.

It belongs to the class-I aminoacyl-tRNA synthetase family. Glutamate--tRNA ligase type 1 subfamily. Monomer.

It is found in the cytoplasm. The enzyme catalyses tRNA(Glu) + L-glutamate + ATP = L-glutamyl-tRNA(Glu) + AMP + diphosphate. Functionally, catalyzes the attachment of glutamate to tRNA(Glu) in a two-step reaction: glutamate is first activated by ATP to form Glu-AMP and then transferred to the acceptor end of tRNA(Glu). The polypeptide is Glutamate--tRNA ligase (Streptococcus mutans serotype c (strain ATCC 700610 / UA159)).